Consider the following 149-residue polypeptide: UPF0178 protein lwe1471 (149 aa).

The protein belongs to the UPF0178 family.

This chain is UPF0178 protein lwe1471, found in Listeria welshimeri serovar 6b (strain ATCC 35897 / DSM 20650 / CCUG 15529 / CIP 8149 / NCTC 11857 / SLCC 5334 / V8).